The sequence spans 137 residues: Large ribosomal subunit protein uL16 (137 aa).

The segment covering 1–17 (MLQPKRTKFRKTHKGRN) has biased composition (basic residues). The segment at 1–24 (MLQPKRTKFRKTHKGRNRGLANTG) is disordered.

This sequence belongs to the universal ribosomal protein uL16 family. In terms of assembly, part of the 50S ribosomal subunit.

Binds 23S rRNA and is also seen to make contacts with the A and possibly P site tRNAs. This is Large ribosomal subunit protein uL16 from Aeromonas salmonicida (strain A449).